A 227-amino-acid chain; its full sequence is Prolactin (227 aa).

Residues 1 to 28 (MDSKWSRRTGSLLLLLVSNLLLCKSTAS) form the signal peptide. Cysteines 32 and 39 form a disulfide. S54, S62, and S118 each carry phosphoserine. 2 cysteine pairs are disulfide-bonded: C86-C202 and C219-C227.

Belongs to the somatotropin/prolactin family. As to quaternary structure, interacts with PRLR.

The protein resides in the secreted. Prolactin acts primarily on the mammary gland by promoting lactation. This Oryctolagus cuniculus (Rabbit) protein is Prolactin (PRL).